Reading from the N-terminus, the 215-residue chain is Beta-crystallin A3-2 (215 aa).

Residues 1–30 (MEIPAIQTEREDITSEKMAQINPLPVPLGP) form an N-terminal arm region. 2 consecutive Beta/gamma crystallin 'Greek key' domains span residues 31–70 (WKIT…KVEC) and 71–117 (GAWI…RPIC). Residues 118–123 (SANHEE) form a connecting peptide region. Beta/gamma crystallin 'Greek key' domains are found at residues 124–165 (SKLV…KVQC) and 166–214 (GAWV…RRIQ).

This sequence belongs to the beta/gamma-crystallin family. As to quaternary structure, homo/heterodimer, or complexes of higher-order. The structure of beta-crystallin oligomers seems to be stabilized through interactions between the N-terminal arms. In terms of processing, the N-terminus is blocked.

In terms of biological role, crystallins are the dominant structural components of the vertebrate eye lens. This is Beta-crystallin A3-2 from Aquarana catesbeiana (American bullfrog).